The primary structure comprises 368 residues: tRNA-specific 2-thiouridylase MnmA (368 aa).

ATP-binding positions include 11–18 (GMSGGVDS) and Met37. The tract at residues 97 to 99 (NPD) is interaction with target base in tRNA. The Nucleophile role is filled by Cys102. A disulfide bridge connects residues Cys102 and Cys199. Gly127 serves as a coordination point for ATP. An interaction with tRNA region spans residues 149–151 (KDQ). Cys199 serves as the catalytic Cysteine persulfide intermediate. The tract at residues 311-312 (RY) is interaction with tRNA.

It belongs to the MnmA/TRMU family. In terms of assembly, interacts with TusE.

The protein localises to the cytoplasm. The enzyme catalyses S-sulfanyl-L-cysteinyl-[protein] + uridine(34) in tRNA + AH2 + ATP = 2-thiouridine(34) in tRNA + L-cysteinyl-[protein] + A + AMP + diphosphate + H(+). Its function is as follows. Catalyzes the 2-thiolation of uridine at the wobble position (U34) of tRNA(Lys), tRNA(Glu) and tRNA(Gln), leading to the formation of s(2)U34, the first step of tRNA-mnm(5)s(2)U34 synthesis. Sulfur is provided by IscS, via a sulfur-relay system. Binds ATP and its substrate tRNAs. The chain is tRNA-specific 2-thiouridylase MnmA from Salmonella choleraesuis (strain SC-B67).